Consider the following 282-residue polypeptide: ATP phosphoribosyltransferase (282 aa).

Belongs to the ATP phosphoribosyltransferase family. Long subfamily. The cofactor is Mg(2+).

Its subcellular location is the cytoplasm. It carries out the reaction 1-(5-phospho-beta-D-ribosyl)-ATP + diphosphate = 5-phospho-alpha-D-ribose 1-diphosphate + ATP. The protein operates within amino-acid biosynthesis; L-histidine biosynthesis; L-histidine from 5-phospho-alpha-D-ribose 1-diphosphate: step 1/9. With respect to regulation, feedback inhibited by histidine. In terms of biological role, catalyzes the condensation of ATP and 5-phosphoribose 1-diphosphate to form N'-(5'-phosphoribosyl)-ATP (PR-ATP). Has a crucial role in the pathway because the rate of histidine biosynthesis seems to be controlled primarily by regulation of HisG enzymatic activity. This is ATP phosphoribosyltransferase from Micrococcus luteus (strain ATCC 4698 / DSM 20030 / JCM 1464 / CCM 169 / CCUG 5858 / IAM 1056 / NBRC 3333 / NCIMB 9278 / NCTC 2665 / VKM Ac-2230) (Micrococcus lysodeikticus).